The sequence spans 349 residues: tRNA pseudouridine synthase D (349 aa).

Residue Phe27 participates in substrate binding. Residue Asp80 is the Nucleophile of the active site. Asn129 provides a ligand contact to substrate. Residues 155-303 enclose the TRUD domain; that stretch reads GVPNYFGAQR…VEAARRAMLL (149 aa). Phe329 is a binding site for substrate.

Belongs to the pseudouridine synthase TruD family.

The catalysed reaction is uridine(13) in tRNA = pseudouridine(13) in tRNA. Its function is as follows. Responsible for synthesis of pseudouridine from uracil-13 in transfer RNAs. The polypeptide is tRNA pseudouridine synthase D (Shigella boydii serotype 18 (strain CDC 3083-94 / BS512)).